Here is a 599-residue protein sequence, read N- to C-terminus: Sulfite reductase [NADPH] flavoprotein alpha-component (599 aa).

Residues 64–202 form the Flavodoxin-like domain; the sequence is VTLISASQTG…AASEWRARVV (139 aa). Residues 70 to 75, 117 to 120, and 153 to 162 each bind FMN; these read SQTGNA, STQG, and LGDTSYEFFC. The FAD-binding FR-type domain occupies 234 to 448; the sequence is DAPLTATLSV…IEHNDNFRLP (215 aa). Residues T322, A356, 386–389, 404–406, Y410, and 419–422 each bind FAD; these read RLYS, TVG, and GGAS. Residues 519-520, 525-529, and D561 each bind NADP(+); these read SR and KIYVQ. Y599 is a binding site for FAD.

The protein belongs to the NADPH-dependent sulphite reductase flavoprotein subunit CysJ family. In the N-terminal section; belongs to the flavodoxin family. This sequence in the C-terminal section; belongs to the flavoprotein pyridine nucleotide cytochrome reductase family. Alpha(8)-beta(8). The alpha component is a flavoprotein, the beta component is a hemoprotein. The cofactor is FAD. FMN serves as cofactor.

It carries out the reaction hydrogen sulfide + 3 NADP(+) + 3 H2O = sulfite + 3 NADPH + 4 H(+). It functions in the pathway sulfur metabolism; hydrogen sulfide biosynthesis; hydrogen sulfide from sulfite (NADPH route): step 1/1. Functionally, component of the sulfite reductase complex that catalyzes the 6-electron reduction of sulfite to sulfide. This is one of several activities required for the biosynthesis of L-cysteine from sulfate. The flavoprotein component catalyzes the electron flow from NADPH -&gt; FAD -&gt; FMN to the hemoprotein component. This chain is Sulfite reductase [NADPH] flavoprotein alpha-component, found in Salmonella paratyphi A (strain ATCC 9150 / SARB42).